Reading from the N-terminus, the 404-residue chain is MMTYEYILVRYGEMTTKGKNRSKFVSTLKDNVKFKLKKFPNIKIDATHDRMYIQLNGEDHEAVSERLKDVFGIHKFNLAMKVPSELEDIKKGALAAFLQVKGDVKTFKITVHRSYKHFPMRTMELLPEIGGHILENTEDITVDVHNPDVNVRVEIRSGYSYIMCDERMGAGGLPVGVGGKVMVLLSGGIDSPVAAYLTMKRGVSVEAVHFHSPPFTSERAKQKVIDLAQELTKYCKRVTLHLVPFTEVQKTINKEIPSSYSMTVMRRMMMRITERIAEERNALAITTGESLGQVASQTLDSMHTINEVTNYPVIRPLITMDKLEIIKIAEEIGTYDISIRPYEDCCTVFTPASPATKPKREKANRFEAKYDFTTLIDEAVANKETVVLQTVEVVAEEEKFEELF.

Positions 61–166 constitute a THUMP domain; sequence EAVSERLKDV…SGYSYIMCDE (106 aa). Residues 184–185, 209–210, Arg266, Gly288, and Gln297 contribute to the ATP site; these read LL and HF.

This sequence belongs to the ThiI family.

It is found in the cytoplasm. It catalyses the reaction [ThiI sulfur-carrier protein]-S-sulfanyl-L-cysteine + a uridine in tRNA + 2 reduced [2Fe-2S]-[ferredoxin] + ATP + H(+) = [ThiI sulfur-carrier protein]-L-cysteine + a 4-thiouridine in tRNA + 2 oxidized [2Fe-2S]-[ferredoxin] + AMP + diphosphate. It carries out the reaction [ThiS sulfur-carrier protein]-C-terminal Gly-Gly-AMP + S-sulfanyl-L-cysteinyl-[cysteine desulfurase] + AH2 = [ThiS sulfur-carrier protein]-C-terminal-Gly-aminoethanethioate + L-cysteinyl-[cysteine desulfurase] + A + AMP + 2 H(+). Its pathway is cofactor biosynthesis; thiamine diphosphate biosynthesis. Catalyzes the ATP-dependent transfer of a sulfur to tRNA to produce 4-thiouridine in position 8 of tRNAs, which functions as a near-UV photosensor. Also catalyzes the transfer of sulfur to the sulfur carrier protein ThiS, forming ThiS-thiocarboxylate. This is a step in the synthesis of thiazole, in the thiamine biosynthesis pathway. The sulfur is donated as persulfide by IscS. This is Probable tRNA sulfurtransferase from Bacillus cereus (strain ATCC 10987 / NRS 248).